The primary structure comprises 397 residues: Mannitol-1-phosphate 5-dehydrogenase (397 aa).

9–20 (AVHFGAGNIGRG) provides a ligand contact to NAD(+). The active site involves lysine 220.

The protein belongs to the mannitol dehydrogenase family. In terms of assembly, monomer.

The enzyme catalyses D-mannitol 1-phosphate + NAD(+) = beta-D-fructose 6-phosphate + NADH + H(+). Its function is as follows. Catalyzes the NAD(H)-dependent interconversion of D-fructose 6-phosphate and D-mannitol 1-phosphate in the mannitol metabolic pathway. This Podospora anserina (strain S / ATCC MYA-4624 / DSM 980 / FGSC 10383) (Pleurage anserina) protein is Mannitol-1-phosphate 5-dehydrogenase.